Reading from the N-terminus, the 271-residue chain is Bifunctional protein FolD (271 aa).

NADP(+) is bound by residues 154–156 (GRS), serine 181, and isoleucine 222.

The protein belongs to the tetrahydrofolate dehydrogenase/cyclohydrolase family. In terms of assembly, homodimer.

It carries out the reaction (6R)-5,10-methylene-5,6,7,8-tetrahydrofolate + NADP(+) = (6R)-5,10-methenyltetrahydrofolate + NADPH. The enzyme catalyses (6R)-5,10-methenyltetrahydrofolate + H2O = (6R)-10-formyltetrahydrofolate + H(+). The protein operates within one-carbon metabolism; tetrahydrofolate interconversion. Catalyzes the oxidation of 5,10-methylenetetrahydrofolate to 5,10-methenyltetrahydrofolate and then the hydrolysis of 5,10-methenyltetrahydrofolate to 10-formyltetrahydrofolate. This chain is Bifunctional protein FolD, found in Thermotoga sp. (strain RQ2).